A 340-amino-acid polypeptide reads, in one-letter code: Phosphate acyltransferase (340 aa).

The protein belongs to the PlsX family. Homodimer. Probably interacts with PlsY.

The protein localises to the cytoplasm. It catalyses the reaction a fatty acyl-[ACP] + phosphate = an acyl phosphate + holo-[ACP]. It participates in lipid metabolism; phospholipid metabolism. Catalyzes the reversible formation of acyl-phosphate (acyl-PO(4)) from acyl-[acyl-carrier-protein] (acyl-ACP). This enzyme utilizes acyl-ACP as fatty acyl donor, but not acyl-CoA. This chain is Phosphate acyltransferase, found in Helicobacter pylori (strain HPAG1).